Here is a 441-residue protein sequence, read N- to C-terminus: Serine hydroxymethyltransferase (441 aa).

Residue 124 to 126 coordinates (6S)-5,6,7,8-tetrahydrofolate; that stretch reads GHI. K239 carries the N6-(pyridoxal phosphate)lysine modification.

The protein belongs to the SHMT family. Homodimer. Pyridoxal 5'-phosphate is required as a cofactor.

It is found in the cytoplasm. Its pathway is amino-acid biosynthesis; glycine biosynthesis; glycine from L-serine: step 1/1. Its function is as follows. Catalyzes the reversible interconversion of serine and glycine with a modified folate serving as the one-carbon carrier. Also exhibits a pteridine-independent aldolase activity toward beta-hydroxyamino acids, producing glycine and aldehydes, via a retro-aldol mechanism. The chain is Serine hydroxymethyltransferase from Cenarchaeum symbiosum (strain A).